Here is a 522-residue protein sequence, read N- to C-terminus: GMP synthase [glutamine-hydrolyzing] (522 aa).

Positions 5–204 constitute a Glutamine amidotransferase type-1 domain; the sequence is YILIIDFGSQ…VKNICNYTNV (200 aa). Catalysis depends on C82, which acts as the Nucleophile. Catalysis depends on residues H178 and E180. In terms of domain architecture, GMPS ATP-PPase spans 205–397; it reads IKYSLSIRKI…IGIPKEIIFR (193 aa). 232–238 provides a ligand contact to ATP; sequence SGGIDSF.

In terms of assembly, homodimer.

It catalyses the reaction XMP + L-glutamine + ATP + H2O = GMP + L-glutamate + AMP + diphosphate + 2 H(+). It functions in the pathway purine metabolism; GMP biosynthesis; GMP from XMP (L-Gln route): step 1/1. Its function is as follows. Catalyzes the synthesis of GMP from XMP. In Wigglesworthia glossinidia brevipalpis, this protein is GMP synthase [glutamine-hydrolyzing].